We begin with the raw amino-acid sequence, 152 residues long: Large ribosomal subunit protein bL9 (152 aa).

Belongs to the bacterial ribosomal protein bL9 family.

Functionally, binds to the 23S rRNA. In Acaryochloris marina (strain MBIC 11017), this protein is Large ribosomal subunit protein bL9.